A 30-amino-acid polypeptide reads, in one-letter code: Ornithine carbamoyltransferase (30 aa).

The protein belongs to the aspartate/ornithine carbamoyltransferase superfamily. OTCase family.

The protein resides in the cytoplasm. It catalyses the reaction carbamoyl phosphate + L-ornithine = L-citrulline + phosphate + H(+). Its pathway is amino-acid biosynthesis; L-arginine biosynthesis; L-arginine from L-ornithine and carbamoyl phosphate: step 1/3. Functionally, has vitronectin and fibronectin-binding activity. The protein is Ornithine carbamoyltransferase (argF) of Staphylococcus epidermidis.